The chain runs to 481 residues: Proton-coupled amino acid transporter 2 (481 aa).

At 1–56 (MSVTKSAGSPQVAATVKLDLVSFPESAKKVQSQDPNPVNGSSSESSEKTKGITGFQ) the chain is on the cytoplasmic side. The tract at residues 26 to 49 (SAKKVQSQDPNPVNGSSSESSEKT) is disordered. Residues 29–40 (KVQSQDPNPVNG) are compositionally biased toward polar residues. A helical membrane pass occupies residues 57–77 (TLVHLVKGNMGTGILGLPLAV). The Extracellular portion of the chain corresponds to 78–79 (KN). A helical transmembrane segment spans residues 80 to 100 (AGILMGPLSLLVMGLIACHCM). The Cytoplasmic segment spans residues 101-146 (HILVRCAQRFCHRLNKPFMDYGDTVMHGLASSPNTWLQSHAHWGRH). A helical membrane pass occupies residues 147–167 (AVSFFLIVTQLGFCCVYIVFL). The Extracellular segment spans residues 168 to 195 (ADNLKQVVEAVNSTTISCHKNETVVLTP). The helical transmembrane segment at 196–216 (TIDSRLYMLAFLPVLGLLVFI) threads the bilayer. At 217 to 220 (RNLR) the chain is on the cytoplasmic side. A helical membrane pass occupies residues 221-241 (VLTIFSLLANVSMLVSLVIIG). Over 242-262 (QYIIQGIPDPSQLPLVASWKT) the chain is Extracellular. Residues 263–283 (YPLFFGTAIFSFESIGVVLPL) form a helical membrane-spanning segment. Residues 284-295 (ENKMKDARRFPT) are Cytoplasmic-facing. The helical transmembrane segment at 296 to 316 (ILSLGMSIITTLYIAIGALGY) threads the bilayer. The Extracellular portion of the chain corresponds to 317–343 (LRFGDDIKASITLNLPNCWLYQSVKLL). Residues 344–364 (YVVGILCTHALQFYVPAEIII) traverse the membrane as a helical segment. Residues 365–377 (PLAVSQVSKRWAL) are Cytoplasmic-facing. The helical transmembrane segment at 378 to 398 (PVDLSIRLALVCVTCMLAILI) threads the bilayer. The Extracellular segment spans residues 399–402 (PRLD). The chain crosses the membrane as a helical span at residues 403–423 (LVLSLVGSVSSSALALIIPPL). Topologically, residues 424–444 (LEVTTYYGEGMSPLTITKDAL) are cytoplasmic. The chain crosses the membrane as a helical span at residues 445 to 465 (ISILGFMGFVVGTYQALDELI). Residues 466–481 (RSGNSLPLSNSTMFIQ) are Extracellular-facing.

It belongs to the amino acid/polyamine transporter 2 family. Expressed in lung and spleen, and to a lower extent in brain, heart, kidney and skeletal muscle.

The protein resides in the cell membrane. Its subcellular location is the endoplasmic reticulum membrane. It is found in the recycling endosome membrane. It carries out the reaction glycine(in) + H(+)(in) = glycine(out) + H(+)(out). The catalysed reaction is L-alanine(in) + H(+)(in) = L-alanine(out) + H(+)(out). It catalyses the reaction D-alanine(in) + H(+)(in) = D-alanine(out) + H(+)(out). The enzyme catalyses L-proline(out) + H(+)(out) = L-proline(in) + H(+)(in). It carries out the reaction D-proline(out) + H(+)(out) = D-proline(in) + H(+)(in). The catalysed reaction is 4-hydroxy-L-proline(in) + H(+)(in) = 4-hydroxy-L-proline(out) + H(+)(out). It catalyses the reaction L-serine(in) + H(+)(in) = L-serine(out) + H(+)(out). The enzyme catalyses D-serine(out) + H(+)(out) = D-serine(in) + H(+)(in). It carries out the reaction beta-alanine(in) + H(+)(in) = beta-alanine(out) + H(+)(out). The catalysed reaction is 4-aminobutanoate(in) + H(+)(in) = 4-aminobutanoate(out) + H(+)(out). It catalyses the reaction sarcosine(in) + H(+)(in) = sarcosine(out) + H(+)(out). The enzyme catalyses N,N-dimethylglycine(in) + H(+)(in) = N,N-dimethylglycine(out) + H(+)(out). With respect to regulation, inhibited by L- and D-pipecolic acid, nipecotic acid, isonipecotic acid, L- and D-cycloserine, and L-2-azetidine-carboxylate. In terms of biological role, electrogenic proton/amino acid symporter with a high selectivity for the small side chains amino acids glycine, alanine and proline, where both L- and D-enantiomers are transported. Extension of the backbone length, as in beta-alanine and 4-aminobutanoate or methylation of the amino group, as in sarcosine and N,N-dimethylglycine, are also tolerated but decrease transport efficiency. A free carboxyl group is preferred. In Rattus norvegicus (Rat), this protein is Proton-coupled amino acid transporter 2.